Here is a 75-residue protein sequence, read N- to C-terminus: Beta-defensin 30 (75 aa).

The signal sequence occupies residues 1–22 (MGSLQLILVLFVLLSDVPPVRS). 3 disulfide bridges follow: cysteine 35–cysteine 62, cysteine 42–cysteine 56, and cysteine 46–cysteine 63.

It belongs to the beta-defensin family.

Its subcellular location is the secreted. Its function is as follows. Has antibacterial activity. In Rattus norvegicus (Rat), this protein is Beta-defensin 30 (Defb30).